A 287-amino-acid polypeptide reads, in one-letter code: ATP synthase gamma chain (287 aa).

It belongs to the ATPase gamma chain family. In terms of assembly, F-type ATPases have 2 components, CF(1) - the catalytic core - and CF(0) - the membrane proton channel. CF(1) has five subunits: alpha(3), beta(3), gamma(1), delta(1), epsilon(1). CF(0) has three main subunits: a, b and c.

Its subcellular location is the cell membrane. Its function is as follows. Produces ATP from ADP in the presence of a proton gradient across the membrane. The gamma chain is believed to be important in regulating ATPase activity and the flow of protons through the CF(0) complex. The sequence is that of ATP synthase gamma chain from Geobacillus stearothermophilus (Bacillus stearothermophilus).